Reading from the N-terminus, the 254-residue chain is MNRRRRIYEGKAKILYEGPEPGTLIQFFKDDATAFNKKKHEVIDGKGVLNNRICEYVFTHLNKIGIPTHFIRRLNMREQLIKEVEMIPLEIVVRNVAAGSLSKRLGIEEGVVLPRSIIEFYYKSDELEDPMVSEEHITAFGWANPAELDDIMALAIRVNDFLSGLFLGVGIQLVDFKIECGRLFEGDMMRIILADEISPDSCRLWDIETQKKMDKDLFRRDLGGLVEAYSEVARRLGIINENEPIRGTGPVLVK.

The protein belongs to the SAICAR synthetase family.

The catalysed reaction is 5-amino-1-(5-phospho-D-ribosyl)imidazole-4-carboxylate + L-aspartate + ATP = (2S)-2-[5-amino-1-(5-phospho-beta-D-ribosyl)imidazole-4-carboxamido]succinate + ADP + phosphate + 2 H(+). It participates in purine metabolism; IMP biosynthesis via de novo pathway; 5-amino-1-(5-phospho-D-ribosyl)imidazole-4-carboxamide from 5-amino-1-(5-phospho-D-ribosyl)imidazole-4-carboxylate: step 1/2. This Agrobacterium fabrum (strain C58 / ATCC 33970) (Agrobacterium tumefaciens (strain C58)) protein is Phosphoribosylaminoimidazole-succinocarboxamide synthase 1 (purC1).